We begin with the raw amino-acid sequence, 243 residues long: MAELLLGVNIDHIATLRNARGTAYPDPVQAAFIAEQAGADGITVHLREDRRHITDRDVRILRQTLDTRMNLEMAVTEEMLAIAVETKPHFCCLVPEKRQEVTTEGGLDVAGQREKMRDACKRLTDAGIQISLFIDADEEQIKAAAEVGAPFIEIHTGCYADAKTDAEQAQELVRIAKAATFAASLGLKVNAGHGLTYHNVKAIAAIPEMHELNIGHAIIGRAVMTGLKDAVAEMKRLMLEARG.

3-amino-2-oxopropyl phosphate is bound at residue asparagine 9. 11 to 12 (DH) contributes to the 1-deoxy-D-xylulose 5-phosphate binding site. Arginine 20 serves as a coordination point for 3-amino-2-oxopropyl phosphate. Histidine 45 functions as the Proton acceptor in the catalytic mechanism. 2 residues coordinate 1-deoxy-D-xylulose 5-phosphate: arginine 47 and histidine 52. The active-site Proton acceptor is the glutamate 72. Threonine 102 lines the 1-deoxy-D-xylulose 5-phosphate pocket. Catalysis depends on histidine 193, which acts as the Proton donor. Residues glycine 194 and 215–216 (GH) each bind 3-amino-2-oxopropyl phosphate.

This sequence belongs to the PNP synthase family. Homooctamer; tetramer of dimers.

The protein resides in the cytoplasm. The catalysed reaction is 3-amino-2-oxopropyl phosphate + 1-deoxy-D-xylulose 5-phosphate = pyridoxine 5'-phosphate + phosphate + 2 H2O + H(+). It participates in cofactor biosynthesis; pyridoxine 5'-phosphate biosynthesis; pyridoxine 5'-phosphate from D-erythrose 4-phosphate: step 5/5. Functionally, catalyzes the complicated ring closure reaction between the two acyclic compounds 1-deoxy-D-xylulose-5-phosphate (DXP) and 3-amino-2-oxopropyl phosphate (1-amino-acetone-3-phosphate or AAP) to form pyridoxine 5'-phosphate (PNP) and inorganic phosphate. This is Pyridoxine 5'-phosphate synthase from Shigella sonnei (strain Ss046).